The following is a 589-amino-acid chain: Probable translation initiation factor IF-2 (589 aa).

Positions 14-229 (LRQPIVCVLG…LAGLAQRFLE (216 aa)) constitute a tr-type G domain. Residues 23 to 30 (GHVDHGKT) are G1. Residue 23–30 (GHVDHGKT) participates in GTP binding. The tract at residues 48-52 (GITQR) is G2. The segment at 84-87 (DTPG) is G3. GTP-binding positions include 84–88 (DTPGH) and 138–141 (NKID). The G4 stretch occupies residues 138 to 141 (NKID). The G5 stretch occupies residues 206–208 (SAK).

It belongs to the TRAFAC class translation factor GTPase superfamily. Classic translation factor GTPase family. IF-2 subfamily.

Its function is as follows. Function in general translation initiation by promoting the binding of the formylmethionine-tRNA to ribosomes. Seems to function along with eIF-2. The protein is Probable translation initiation factor IF-2 (infB) of Thermoplasma acidophilum (strain ATCC 25905 / DSM 1728 / JCM 9062 / NBRC 15155 / AMRC-C165).